We begin with the raw amino-acid sequence, 194 residues long: Phosphoheptose isomerase (194 aa).

The region spanning 37–194 is the SIS domain; it reads ISNSFKQGGK…LIEFEMAKQA (158 aa). 52–54 contacts substrate; that stretch reads NGG. Positions 61 and 65 each coordinate Zn(2+). Substrate contacts are provided by residues E65, 93–94, 119–121, S124, and Q172; these read ND and STS. Q172 and H180 together coordinate Zn(2+).

Belongs to the SIS family. GmhA subfamily. In terms of assembly, homotetramer. The cofactor is Zn(2+).

It is found in the cytoplasm. The enzyme catalyses 2 D-sedoheptulose 7-phosphate = D-glycero-alpha-D-manno-heptose 7-phosphate + D-glycero-beta-D-manno-heptose 7-phosphate. It participates in carbohydrate biosynthesis; D-glycero-D-manno-heptose 7-phosphate biosynthesis; D-glycero-alpha-D-manno-heptose 7-phosphate and D-glycero-beta-D-manno-heptose 7-phosphate from sedoheptulose 7-phosphate: step 1/1. Catalyzes the isomerization of sedoheptulose 7-phosphate in D-glycero-D-manno-heptose 7-phosphate. The polypeptide is Phosphoheptose isomerase (Haemophilus influenzae (strain 86-028NP)).